The chain runs to 459 residues: Mitochondrial distribution and morphology protein 10 (459 aa).

It belongs to the MDM10 family. In terms of assembly, component of the ER-mitochondria encounter structure (ERMES) or MDM complex, composed of MMM1, MDM10, MDM12 and MDM34. Associates with the mitochondrial outer membrane sorting assembly machinery SAM(core) complex.

It localises to the mitochondrion outer membrane. Functionally, component of the ERMES/MDM complex, which serves as a molecular tether to connect the endoplasmic reticulum and mitochondria. Components of this complex are involved in the control of mitochondrial shape and protein biogenesis and may function in phospholipid exchange. MDM10 is involved in the late assembly steps of the general translocase of the mitochondrial outer membrane (TOM complex). Functions in the TOM40-specific route of the assembly of outer membrane beta-barrel proteins, including the association of TOM40 with the receptor TOM22 and small TOM proteins. Can associate with the SAM(core) complex as well as the MDM12-MMM1 complex, both involved in late steps of the major beta-barrel assembly pathway, that is responsible for biogenesis of all outer membrane beta-barrel proteins. May act as a switch that shuttles between both complexes and channels precursor proteins into the TOM40-specific pathway. Plays a role in mitochondrial morphology and in the inheritance of mitochondria. The polypeptide is Mitochondrial distribution and morphology protein 10 (Clavispora lusitaniae (strain ATCC 42720) (Yeast)).